A 317-amino-acid polypeptide reads, in one-letter code: Tyrosine--tRNA ligase (317 aa).

Tyr-33 is an L-tyrosine binding site. The 'HIGH' region signature appears at 38 to 46 (PSGKIHMGH). Residues Tyr-155, Gln-159, Asp-162, and Gln-177 each coordinate L-tyrosine. Residues 211–215 (KMASS) carry the 'KMSKS' region motif. Ser-214 contacts ATP.

Belongs to the class-I aminoacyl-tRNA synthetase family. TyrS type 3 subfamily. Homodimer.

It is found in the cytoplasm. It catalyses the reaction tRNA(Tyr) + L-tyrosine + ATP = L-tyrosyl-tRNA(Tyr) + AMP + diphosphate + H(+). Its function is as follows. Catalyzes the attachment of tyrosine to tRNA(Tyr) in a two-step reaction: tyrosine is first activated by ATP to form Tyr-AMP and then transferred to the acceptor end of tRNA(Tyr). The sequence is that of Tyrosine--tRNA ligase from Methanosarcina acetivorans (strain ATCC 35395 / DSM 2834 / JCM 12185 / C2A).